A 383-amino-acid polypeptide reads, in one-letter code: tRNA-specific 2-thiouridylase MnmA (383 aa).

ATP is bound by residues 30 to 37 (GMSGGVDS) and M56. The tract at residues 116-118 (NPD) is interaction with target base in tRNA. C121 acts as the Nucleophile in catalysis. A disulfide bond links C121 and C218. Residue G146 participates in ATP binding. Residues 168–170 (KDQ) are interaction with tRNA. Catalysis depends on C218, which acts as the Cysteine persulfide intermediate. An interaction with tRNA region spans residues 330–331 (RY).

Belongs to the MnmA/TRMU family.

The protein localises to the cytoplasm. The enzyme catalyses S-sulfanyl-L-cysteinyl-[protein] + uridine(34) in tRNA + AH2 + ATP = 2-thiouridine(34) in tRNA + L-cysteinyl-[protein] + A + AMP + diphosphate + H(+). Its function is as follows. Catalyzes the 2-thiolation of uridine at the wobble position (U34) of tRNA, leading to the formation of s(2)U34. In Haemophilus influenzae (strain ATCC 51907 / DSM 11121 / KW20 / Rd), this protein is tRNA-specific 2-thiouridylase MnmA.